Here is a 672-residue protein sequence, read N- to C-terminus: Glycine--tRNA ligase beta subunit (672 aa).

This sequence belongs to the class-II aminoacyl-tRNA synthetase family. In terms of assembly, tetramer of two alpha and two beta subunits.

It is found in the cytoplasm. It catalyses the reaction tRNA(Gly) + glycine + ATP = glycyl-tRNA(Gly) + AMP + diphosphate. In Thermotoga maritima (strain ATCC 43589 / DSM 3109 / JCM 10099 / NBRC 100826 / MSB8), this protein is Glycine--tRNA ligase beta subunit (glyS).